The following is a 426-amino-acid chain: Serine/threonine-protein kinase SRPK (426 aa).

The span at 1 to 23 (MENIFKEKEKGKEKAKEEEKEND) shows a compositional bias: basic and acidic residues. Residues 1-40 (MENIFKEKEKGKEKAKEEEKENDSGDLFDSEDEGTEDYKK) are disordered. Residues 24-35 (SGDLFDSEDEGT) are compositionally biased toward acidic residues. Positions 56–419 (YRIVKKLGWG…ARDSLEHPYM (364 aa)) constitute a Protein kinase domain. ATP is bound by residues 62 to 70 (LGWGHFSTV) and lysine 86. Aspartate 188 serves as the catalytic Proton acceptor. A Nuclear localization signal motif is present at residues 318–328 (PKKGDKYDKTD).

This sequence belongs to the protein kinase superfamily. CMGC Ser/Thr protein kinase family.

It is found in the nucleus. It carries out the reaction L-seryl-[protein] + ATP = O-phospho-L-seryl-[protein] + ADP + H(+). The catalysed reaction is L-threonyl-[protein] + ATP = O-phospho-L-threonyl-[protein] + ADP + H(+). Functionally, phosphorylates serine/arginine-rich protein PSR. The sequence is that of Serine/threonine-protein kinase SRPK from Physarum polycephalum (Slime mold).